We begin with the raw amino-acid sequence, 273 residues long: ATP synthase subunit delta (273 aa).

The segment at 55–78 (TDPAQSARPRPSSPSVSSAPRSAA) is disordered. Positions 57–78 (PAQSARPRPSSPSVSSAPRSAA) are enriched in low complexity.

This sequence belongs to the ATPase delta chain family. As to quaternary structure, F-type ATPases have 2 components, F(1) - the catalytic core - and F(0) - the membrane proton channel. F(1) has five subunits: alpha(3), beta(3), gamma(1), delta(1), epsilon(1). F(0) has three main subunits: a(1), b(2) and c(10-14). The alpha and beta chains form an alternating ring which encloses part of the gamma chain. F(1) is attached to F(0) by a central stalk formed by the gamma and epsilon chains, while a peripheral stalk is formed by the delta and b chains.

The protein localises to the cell membrane. Functionally, f(1)F(0) ATP synthase produces ATP from ADP in the presence of a proton or sodium gradient. F-type ATPases consist of two structural domains, F(1) containing the extramembraneous catalytic core and F(0) containing the membrane proton channel, linked together by a central stalk and a peripheral stalk. During catalysis, ATP synthesis in the catalytic domain of F(1) is coupled via a rotary mechanism of the central stalk subunits to proton translocation. This protein is part of the stalk that links CF(0) to CF(1). It either transmits conformational changes from CF(0) to CF(1) or is implicated in proton conduction. The sequence is that of ATP synthase subunit delta from Streptomyces lividans.